Here is a 512-residue protein sequence, read N- to C-terminus: DEAD-box ATP-dependent RNA helicase 5 (512 aa).

Disordered regions lie at residues 1–33 (MGRSMLPEQQEDVSRKSKKEKKSKKDKKRKLEA) and 45–76 (ATSTDEATKSSKKKRAKGDLGQGEEAENGGGK). Residues 14 to 45 (SRKSKKEKKSKKDKKRKLEAEAEVVVVEAAAA) are a coiled coil. Basic residues predominate over residues 16-30 (KSKKEKKSKKDKKRK). A Q motif motif is present at residues 94-120 (SSFAATALPPQVLDCCKGFERPSPIQA). The Helicase ATP-binding domain occupies 123–300 (WPYLLDGRDF…QEFMDPNPIK (178 aa)). 136-143 (AATGSGKT) lines the ATP pocket. The DEAD box motif lies at 248-251 (DEAD). The region spanning 333–476 (LLDKYHKAQR…VVPPALTKFG (144 aa)) is the Helicase C-terminal domain.

This sequence belongs to the DEAD box helicase family. DDX5/DBP2 subfamily.

Its subcellular location is the nucleus. The protein resides in the nucleolus. It carries out the reaction ATP + H2O = ADP + phosphate + H(+). Its function is as follows. ATP-dependent RNA helicase required for 60S ribosomal subunit synthesis. Involved in efficient pre-rRNA processing, predominantly at site A3, which is necessary for the normal formation of 25S and 5.8S rRNAs. The polypeptide is DEAD-box ATP-dependent RNA helicase 5 (Oryza sativa subsp. japonica (Rice)).